The following is a 354-amino-acid chain: Glycerol-3-phosphate dehydrogenase [NAD(P)+] (354 aa).

NADPH contacts are provided by serine 27, phenylalanine 28, arginine 48, and lysine 121. The sn-glycerol 3-phosphate site is built by lysine 121 and glycine 149. Alanine 153 lines the NADPH pocket. 5 residues coordinate sn-glycerol 3-phosphate: lysine 204, aspartate 257, serine 267, arginine 268, and asparagine 269. Residue lysine 204 is the Proton acceptor of the active site. Arginine 268 is an NADPH binding site. NADPH is bound by residues valine 292 and glutamate 294.

This sequence belongs to the NAD-dependent glycerol-3-phosphate dehydrogenase family.

Its subcellular location is the cytoplasm. The enzyme catalyses sn-glycerol 3-phosphate + NAD(+) = dihydroxyacetone phosphate + NADH + H(+). The catalysed reaction is sn-glycerol 3-phosphate + NADP(+) = dihydroxyacetone phosphate + NADPH + H(+). It participates in membrane lipid metabolism; glycerophospholipid metabolism. Catalyzes the reduction of the glycolytic intermediate dihydroxyacetone phosphate (DHAP) to sn-glycerol 3-phosphate (G3P), the key precursor for phospholipid synthesis. In Pseudomonas fluorescens (strain Pf0-1), this protein is Glycerol-3-phosphate dehydrogenase [NAD(P)+].